The sequence spans 282 residues: HTH-type transcriptional activator RhaR (282 aa).

Residues 179–277 (DKLITALANS…GMTPSQWRHL (99 aa)) form the HTH araC/xylS-type domain. DNA-binding regions (H-T-H motif) lie at residues 196-217 (DAFC…RAQT) and 244-267 (VSEI…TRET).

As to quaternary structure, binds DNA as a dimer.

Its subcellular location is the cytoplasm. In terms of biological role, activates expression of the rhaSR operon in response to L-rhamnose. This chain is HTH-type transcriptional activator RhaR, found in Salmonella typhi.